Reading from the N-terminus, the 226-residue chain is Urease accessory protein UreE (226 aa).

The interval 192 to 226 (PHGSGLHIHSIHSHGDGHSHDHDHSHGDHDSDHKH) is disordered. Residues 204–226 (SHGDGHSHDHDHSHGDHDSDHKH) are compositionally biased toward basic and acidic residues.

The protein belongs to the UreE family.

It is found in the cytoplasm. Functionally, involved in urease metallocenter assembly. Binds nickel. Probably functions as a nickel donor during metallocenter assembly. In Yersinia intermedia, this protein is Urease accessory protein UreE.